Consider the following 311-residue polypeptide: Methionyl-tRNA formyltransferase (311 aa).

110-113 (SLLP) is a (6S)-5,6,7,8-tetrahydrofolate binding site.

It belongs to the Fmt family.

It carries out the reaction L-methionyl-tRNA(fMet) + (6R)-10-formyltetrahydrofolate = N-formyl-L-methionyl-tRNA(fMet) + (6S)-5,6,7,8-tetrahydrofolate + H(+). Its function is as follows. Attaches a formyl group to the free amino group of methionyl-tRNA(fMet). The formyl group appears to play a dual role in the initiator identity of N-formylmethionyl-tRNA by promoting its recognition by IF2 and preventing the misappropriation of this tRNA by the elongation apparatus. The protein is Methionyl-tRNA formyltransferase of Streptococcus sanguinis (strain SK36).